We begin with the raw amino-acid sequence, 266 residues long: Carboxy-S-adenosyl-L-methionine synthase (266 aa).

Residues methionine 1 to aspartate 24 form a disordered region. S-adenosyl-L-methionine is bound by residues tyrosine 58, glycine 83–serine 85, aspartate 108–asparagine 109, aspartate 136–isoleucine 137, asparagine 151, and arginine 218.

Belongs to the class I-like SAM-binding methyltransferase superfamily. Cx-SAM synthase family. Homodimer.

It carries out the reaction prephenate + S-adenosyl-L-methionine = carboxy-S-adenosyl-L-methionine + 3-phenylpyruvate + H2O. In terms of biological role, catalyzes the conversion of S-adenosyl-L-methionine (SAM) to carboxy-S-adenosyl-L-methionine (Cx-SAM). The chain is Carboxy-S-adenosyl-L-methionine synthase from Yersinia enterocolitica serotype O:8 / biotype 1B (strain NCTC 13174 / 8081).